A 260-amino-acid polypeptide reads, in one-letter code: Tryptophan synthase alpha chain (260 aa).

Residues glutamate 52 and aspartate 63 each act as proton acceptor in the active site.

The protein belongs to the TrpA family. Tetramer of two alpha and two beta chains.

The catalysed reaction is (1S,2R)-1-C-(indol-3-yl)glycerol 3-phosphate + L-serine = D-glyceraldehyde 3-phosphate + L-tryptophan + H2O. It functions in the pathway amino-acid biosynthesis; L-tryptophan biosynthesis; L-tryptophan from chorismate: step 5/5. In terms of biological role, the alpha subunit is responsible for the aldol cleavage of indoleglycerol phosphate to indole and glyceraldehyde 3-phosphate. This is Tryptophan synthase alpha chain from Streptococcus mutans serotype c (strain ATCC 700610 / UA159).